The chain runs to 388 residues: Probable E3 ubiquitin-protein ligase LOG2 (388 aa).

Positions 1–43 (MGNISSSGGEGRRRRRRNHTAAPPPPPPPPSSSLPPPPLPTEI) are disordered. G2 carries N-myristoyl glycine lipidation. The segment covering 22–40 (APPPPPPPPSSSLPPPPLP) has biased composition (pro residues). The DAR2 domain stretch occupies residues 159–281 (FTFDATVSGR…GEIKIRVVKQ (123 aa)). Residues 319–358 (CVICLSEPRDTTVLPCRHMCMCSGCAKVLRFQTNRCPICR) form an RING-type; atypical zinc finger. Residues 368-388 (KVHGNNGSGNNTGQGETVEQE) form a disordered region.

Belongs to the RING-type zinc finger family. LOG2 subfamily. As to quaternary structure, interacts with GDU1. In terms of processing, myristoylated (in vitro). In terms of tissue distribution, expressed in the vascular tissues in both phloem and xylem parenchyma cells.

The protein resides in the cell membrane. The enzyme catalyses S-ubiquitinyl-[E2 ubiquitin-conjugating enzyme]-L-cysteine + [acceptor protein]-L-lysine = [E2 ubiquitin-conjugating enzyme]-L-cysteine + N(6)-ubiquitinyl-[acceptor protein]-L-lysine.. Its pathway is protein modification; protein ubiquitination. Acts as an E3 ubiquitin-protein ligase, or as part of E3 complex, which accepts ubiquitin from specific E2 ubiquitin-conjugating enzymes and then transfers it to substrates (in vitro). Required for GLUTAMINE DUMPER 1(GDU1)-induced amino acid secretion and for amino acid homeostasis. Ubiquitinates GDU1 (in vitro). This Arabidopsis thaliana (Mouse-ear cress) protein is Probable E3 ubiquitin-protein ligase LOG2 (LOG2).